Here is a 204-residue protein sequence, read N- to C-terminus: Holliday junction branch migration complex subunit RuvA (204 aa).

The interval 1–64 (MIGRLQGILL…EDAHLLFGFA (64 aa)) is domain I. Residues 65-143 (QKTDRTLFRE…GVKQSDFFVE (79 aa)) form a domain II region. The tract at residues 144–155 (STHIPLSPSIES) is flexible linker. The domain III stretch occupies residues 156–204 (HSESSSDEAISALIALGYKPVEAEKMVKRVAKPELTSEQVIREALKAAL).

Belongs to the RuvA family. In terms of assembly, homotetramer. Forms an RuvA(8)-RuvB(12)-Holliday junction (HJ) complex. HJ DNA is sandwiched between 2 RuvA tetramers; dsDNA enters through RuvA and exits via RuvB. An RuvB hexamer assembles on each DNA strand where it exits the tetramer. Each RuvB hexamer is contacted by two RuvA subunits (via domain III) on 2 adjacent RuvB subunits; this complex drives branch migration. In the full resolvosome a probable DNA-RuvA(4)-RuvB(12)-RuvC(2) complex forms which resolves the HJ.

The protein localises to the cytoplasm. The RuvA-RuvB-RuvC complex processes Holliday junction (HJ) DNA during genetic recombination and DNA repair, while the RuvA-RuvB complex plays an important role in the rescue of blocked DNA replication forks via replication fork reversal (RFR). RuvA specifically binds to HJ cruciform DNA, conferring on it an open structure. The RuvB hexamer acts as an ATP-dependent pump, pulling dsDNA into and through the RuvAB complex. HJ branch migration allows RuvC to scan DNA until it finds its consensus sequence, where it cleaves and resolves the cruciform DNA. This is Holliday junction branch migration complex subunit RuvA from Haemophilus influenzae (strain PittEE).